Consider the following 132-residue polypeptide: Small ribosomal subunit protein uS8 (132 aa).

Belongs to the universal ribosomal protein uS8 family. Part of the 30S ribosomal subunit. Contacts proteins S5 and S12.

Functionally, one of the primary rRNA binding proteins, it binds directly to 16S rRNA central domain where it helps coordinate assembly of the platform of the 30S subunit. The sequence is that of Small ribosomal subunit protein uS8 from Cereibacter sphaeroides (strain ATCC 17029 / ATH 2.4.9) (Rhodobacter sphaeroides).